A 348-amino-acid polypeptide reads, in one-letter code: Anthranilate phosphoribosyltransferase (348 aa).

5-phospho-alpha-D-ribose 1-diphosphate contacts are provided by residues G89, 92–93, T97, 99–102, 117–125, and S129; these read GD, NIST, and KHGNRSASS. G89 is an anthranilate binding site. A Mg(2+)-binding site is contributed by S101. Residue N120 coordinates anthranilate. R175 contributes to the anthranilate binding site. Mg(2+) is bound by residues D234 and E235.

Belongs to the anthranilate phosphoribosyltransferase family. Homodimer. It depends on Mg(2+) as a cofactor.

It catalyses the reaction N-(5-phospho-beta-D-ribosyl)anthranilate + diphosphate = 5-phospho-alpha-D-ribose 1-diphosphate + anthranilate. The protein operates within amino-acid biosynthesis; L-tryptophan biosynthesis; L-tryptophan from chorismate: step 2/5. Its function is as follows. Catalyzes the transfer of the phosphoribosyl group of 5-phosphorylribose-1-pyrophosphate (PRPP) to anthranilate to yield N-(5'-phosphoribosyl)-anthranilate (PRA). The polypeptide is Anthranilate phosphoribosyltransferase (Synechocystis sp. (strain ATCC 27184 / PCC 6803 / Kazusa)).